We begin with the raw amino-acid sequence, 336 residues long: Holliday junction branch migration complex subunit RuvB (336 aa).

Residues 1–182 are large ATPase domain (RuvB-L); sequence MKERIVNLET…FGMSFRMQFY (182 aa). ATP-binding positions include Leu21, Arg22, Gly63, Lys66, Thr67, Ser68, 129–131, Arg172, Tyr182, and Arg219; that span reads EDF. Thr67 is a Mg(2+) binding site. Residues 183 to 253 are small ATPAse domain (RuvB-S); that stretch reads SPSELALIIK…ITLHALNELG (71 aa). A head domain (RuvB-H) region spans residues 256 to 336; that stretch reads ELGFDEADLA…IPTLKSQSLF (81 aa). DNA-binding residues include Arg310 and Arg315.

This sequence belongs to the RuvB family. As to quaternary structure, homohexamer. Forms an RuvA(8)-RuvB(12)-Holliday junction (HJ) complex. HJ DNA is sandwiched between 2 RuvA tetramers; dsDNA enters through RuvA and exits via RuvB. An RuvB hexamer assembles on each DNA strand where it exits the tetramer. Each RuvB hexamer is contacted by two RuvA subunits (via domain III) on 2 adjacent RuvB subunits; this complex drives branch migration. In the full resolvosome a probable DNA-RuvA(4)-RuvB(12)-RuvC(2) complex forms which resolves the HJ.

The protein localises to the cytoplasm. It carries out the reaction ATP + H2O = ADP + phosphate + H(+). Functionally, the RuvA-RuvB-RuvC complex processes Holliday junction (HJ) DNA during genetic recombination and DNA repair, while the RuvA-RuvB complex plays an important role in the rescue of blocked DNA replication forks via replication fork reversal (RFR). RuvA specifically binds to HJ cruciform DNA, conferring on it an open structure. The RuvB hexamer acts as an ATP-dependent pump, pulling dsDNA into and through the RuvAB complex. RuvB forms 2 homohexamers on either side of HJ DNA bound by 1 or 2 RuvA tetramers; 4 subunits per hexamer contact DNA at a time. Coordinated motions by a converter formed by DNA-disengaged RuvB subunits stimulates ATP hydrolysis and nucleotide exchange. Immobilization of the converter enables RuvB to convert the ATP-contained energy into a lever motion, pulling 2 nucleotides of DNA out of the RuvA tetramer per ATP hydrolyzed, thus driving DNA branch migration. The RuvB motors rotate together with the DNA substrate, which together with the progressing nucleotide cycle form the mechanistic basis for DNA recombination by continuous HJ branch migration. Branch migration allows RuvC to scan DNA until it finds its consensus sequence, where it cleaves and resolves cruciform DNA. The sequence is that of Holliday junction branch migration complex subunit RuvB from Helicobacter acinonychis (strain Sheeba).